The following is a 249-amino-acid chain: dTDP-4-amino-2,3,4,6-tetradeoxy-D-glucose N,N-dimethyltransferase (249 aa).

Arg30 is a binding site for substrate. Residues Ala59, Glu80, and 102-103 (DI) each bind S-adenosyl-L-methionine. Substrate-binding positions include Thr165, 178-182 (RLSHS), and Arg241.

This sequence belongs to the methyltransferase TylM1/DesVI family. Homodimer. Mg(2+) serves as cofactor.

The enzyme catalyses dTDP-4-amino-2,3,4,6-tetradeoxy-alpha-D-erythro-hexopyranose + 2 S-adenosyl-L-methionine = dTDP-alpha-D-forosamine + 2 S-adenosyl-L-homocysteine + 2 H(+). In terms of biological role, involved in the biosynthesis of forosamine ((4-dimethylamino)-2,3,4,6-tetradeoxy-alpha-D-threo-hexopyranose), a highly deoxygenated sugar component of several bioactive natural products such as the insecticidal spinosyns A and D. Catalyzes the dimethylation of the C-4 amino group from dTDP-4-amino-2,3,4,6-tetradeoxy-alpha-D-glucose to yield dTDP-D-forosamine. The protein is dTDP-4-amino-2,3,4,6-tetradeoxy-D-glucose N,N-dimethyltransferase of Saccharopolyspora spinosa.